The primary structure comprises 567 residues: Hexose transporter HXT16 (567 aa).

A compositionally biased stretch (polar residues) spans 1 to 19 (MASEQSSPEINADNLNSSA). The tract at residues 1-32 (MASEQSSPEINADNLNSSAADVHVQPPGEKEW) is disordered. The Cytoplasmic segment spans residues 1–55 (MASEQSSPEINADNLNSSAADVHVQPPGEKEWSDGFYDKEVINGNTPDAPKRGFL). A helical transmembrane segment spans residues 56-76 (GYLIIYLLCYPVSFGGFLPGW). At 77–112 (DSGITAGFINMDNFKMNFGSYKHSTGEYYLSNVRMG) the chain is on the extracellular side. A helical membrane pass occupies residues 113 to 133 (LLVAMFSVGCSIGGVAFARLA). Topologically, residues 134-139 (DTLGRR) are cytoplasmic. A helical membrane pass occupies residues 140–160 (LAIVIVVLVYMVGAIIQISSN). Topologically, residues 161–170 (HKWYQYFVGK) are extracellular. A helical membrane pass occupies residues 171–191 (IIYGLGAGGCSVLCPMLLSEI). At 192 to 197 (APTDLR) the chain is on the cytoplasmic side. A helical transmembrane segment spans residues 198–218 (GGLVSLYQLNMTFGIFLGYCS). Topologically, residues 219–232 (VYGTRKYSNTAQWR) are extracellular. The chain crosses the membrane as a helical span at residues 233–253 (IPVGLCFLWALIIIVGMLLVP). At 254 to 336 (ESPRYLIECE…VQTFLQLTGE (83 aa)) the chain is on the cytoplasmic side. Residues 337-353 (NYFFFYGTTIFKSVGLT) traverse the membrane as a helical segment. Residues 354–359 (DGFETS) lie on the Extracellular side of the membrane. The chain crosses the membrane as a helical span at residues 360–377 (IVLGTVNFFSTIIAVMVV). Topologically, residues 378–384 (DKIGRRK) are cytoplasmic. Residues 385–405 (CLLFGAASMMACMVIFASIGV) form a helical membrane-spanning segment. At 406-427 (KCLYPHGQDGPSSKGAGNAMIV) the chain is on the extracellular side. A helical membrane pass occupies residues 428–448 (FTCFYIFCFATTWAPVAYIVV). Over 449–465 (AESFPSKVKSKAMSIST) the chain is Cytoplasmic. Residues 466 to 486 (AFNWLWQFLIGFFTPFITGSI) form a helical membrane-spanning segment. His487 is a topological domain (extracellular). The helical transmembrane segment at 488-508 (FYYGYVFVGCLVAMFLYVFFF) threads the bilayer. Over 509 to 567 (LPETIGLSLEETQLLYEEGIKPWKSASWVPPSRRGASSRETEAKKKSWKEVLKFPKSFN) the chain is Cytoplasmic. The interval 533–555 (SASWVPPSRRGASSRETEAKKKS) is disordered. Positions 545-555 (SSRETEAKKKS) are enriched in basic and acidic residues.

The protein belongs to the major facilitator superfamily. Sugar transporter (TC 2.A.1.1) family.

It localises to the membrane. In terms of biological role, probable glucose transporter. The polypeptide is Hexose transporter HXT16 (HXT16) (Saccharomyces cerevisiae (strain ATCC 204508 / S288c) (Baker's yeast)).